A 251-amino-acid polypeptide reads, in one-letter code: Probable transcriptional regulatory protein cauri_1421 (251 aa).

The disordered stretch occupies residues 1–21; that stretch reads MAGHSKWATTKHKKAANDAKR.

Belongs to the TACO1 family.

The protein resides in the cytoplasm. The polypeptide is Probable transcriptional regulatory protein cauri_1421 (Corynebacterium aurimucosum (strain ATCC 700975 / DSM 44827 / CIP 107346 / CN-1) (Corynebacterium nigricans)).